Reading from the N-terminus, the 494-residue chain is Probable cytosol aminopeptidase (494 aa).

Mn(2+)-binding residues include Lys260 and Asp265. The active site involves Lys272. 3 residues coordinate Mn(2+): Asp283, Asp342, and Glu344. Residue Arg346 is part of the active site.

This sequence belongs to the peptidase M17 family. Mn(2+) is required as a cofactor.

Its subcellular location is the cytoplasm. The enzyme catalyses Release of an N-terminal amino acid, Xaa-|-Yaa-, in which Xaa is preferably Leu, but may be other amino acids including Pro although not Arg or Lys, and Yaa may be Pro. Amino acid amides and methyl esters are also readily hydrolyzed, but rates on arylamides are exceedingly low.. The catalysed reaction is Release of an N-terminal amino acid, preferentially leucine, but not glutamic or aspartic acids.. Its function is as follows. Presumably involved in the processing and regular turnover of intracellular proteins. Catalyzes the removal of unsubstituted N-terminal amino acids from various peptides. This chain is Probable cytosol aminopeptidase, found in Bacillus cereus (strain ZK / E33L).